The primary structure comprises 420 residues: Ribosome biogenesis protein WDR12 homolog (420 aa).

The tract at residues 10–92 is ubiquitin-like (UBL) domain; it reads VQVHLKTKQE…EDAIEIEYVE (83 aa). 7 WD repeats span residues 104-142, 143-185, 192-231, 250-288, 290-329, 335-375, and 379-417; these read LHDDWVSAVKASGKWILSGCYDNTLNLWTNKGKHILTIS, GHTA…NSVE, GHERGVDSVSVSPDGLRFATGSWDTMLKVWSAEVEDAVEG, GHRESVSAVQWMDASTLLTGSWDHTLKVWDLSLEGIKTE, STNKSIFDASYSKLNRLILTASADKNLRLYDPRTNQGSVV, GHNA…APLY, and GHGEKVLDIDWSNPKYIVSGGVDNTVRVFKSRKALADDA.

The protein belongs to the WD repeat WDR12/YTM1 family.

Its subcellular location is the nucleus. It localises to the nucleolus. It is found in the nucleoplasm. Its function is as follows. Required for maturation of ribosomal RNAs and formation of the large ribosomal subunit. The sequence is that of Ribosome biogenesis protein WDR12 homolog from Drosophila yakuba (Fruit fly).